A 255-amino-acid polypeptide reads, in one-letter code: Uracil-DNA glycosylase (255 aa).

Residue D93 is the Proton acceptor of the active site.

This sequence belongs to the uracil-DNA glycosylase (UDG) superfamily. UNG family.

The protein localises to the host nucleus. It catalyses the reaction Hydrolyzes single-stranded DNA or mismatched double-stranded DNA and polynucleotides, releasing free uracil.. In terms of biological role, excises uracil residues from the DNA which can arise as a result of misincorporation of dUMP residues by DNA polymerase or deamination of cytosines. Therefore may reduce deleterious uracil incorporation into the viral genome, particularly in terminally differentiated cells which lack DNA repair enzymes. This is Uracil-DNA glycosylase (U81) from Human herpesvirus 6A (strain Uganda-1102) (HHV-6 variant A).